The following is a 258-amino-acid chain: 14-3-3 protein homolog (258 aa).

Belongs to the 14-3-3 family.

This chain is 14-3-3 protein homolog, found in Encephalitozoon cuniculi (strain GB-M1) (Microsporidian parasite).